Here is a 380-residue protein sequence, read N- to C-terminus: O-antigen polymerase (380 aa).

Helical transmembrane passes span 1 to 21, 27 to 47, 55 to 75, 94 to 114, 132 to 152, 169 to 189, 201 to 221, 229 to 249, 282 to 302, 306 to 326, 332 to 352, and 353 to 373; these read MTYF…RLTP, NIVL…TFNE, ATTL…YILI, YIYW…IILL, SISG…MYLA, FLLA…VYIV, LIYG…LGKF, IISA…AAFN, ILPW…FAPW, LGLY…GIWF, LAVG…FFQE, and HYLL…LLAM.

The protein localises to the cell inner membrane. It carries out the reaction n lipid-linked O-antigen repeat units = a lipid-linked O antigen + (n-1) polyisoprenyl diphosphate.. It participates in bacterial outer membrane biogenesis; LPS O-antigen biosynthesis. Functionally, polymerase involved in the biosynthesis of the lipopolysaccharide (LPS). Catalyzes the polymerization of the O-antigen repeat units on the periplasmic face of the inner membrane, leading to the formation of the lipid-linked O-antigen molecule. This chain is O-antigen polymerase, found in Shigella dysenteriae.